We begin with the raw amino-acid sequence, 512 residues long: 2-isopropylmalate synthase (512 aa).

Residues 4-266 (IQFFDTTLRD…ETNIVLNQFK (263 aa)) enclose the Pyruvate carboxyltransferase domain. Residues Asp13, His201, His203, and Asn237 each contribute to the Mn(2+) site. A regulatory domain region spans residues 390 to 512 (ELKHLQVQYV…SKQADFEEVK (123 aa)).

Belongs to the alpha-IPM synthase/homocitrate synthase family. LeuA type 1 subfamily. Homodimer. Requires Mn(2+) as cofactor.

It is found in the cytoplasm. It carries out the reaction 3-methyl-2-oxobutanoate + acetyl-CoA + H2O = (2S)-2-isopropylmalate + CoA + H(+). Its pathway is amino-acid biosynthesis; L-leucine biosynthesis; L-leucine from 3-methyl-2-oxobutanoate: step 1/4. Catalyzes the condensation of the acetyl group of acetyl-CoA with 3-methyl-2-oxobutanoate (2-ketoisovalerate) to form 3-carboxy-3-hydroxy-4-methylpentanoate (2-isopropylmalate). This Listeria monocytogenes serotype 4b (strain CLIP80459) protein is 2-isopropylmalate synthase.